A 338-amino-acid chain; its full sequence is Glycerol-3-phosphate dehydrogenase [NAD(P)+] (338 aa).

NADPH contacts are provided by tryptophan 11, arginine 30, and lysine 109. Residues lysine 109, glycine 143, and serine 145 each contribute to the sn-glycerol 3-phosphate site. Alanine 147 serves as a coordination point for NADPH. The sn-glycerol 3-phosphate site is built by lysine 198, aspartate 251, serine 261, arginine 262, and asparagine 263. Lysine 198 acts as the Proton acceptor in catalysis. An NADPH-binding site is contributed by arginine 262. NADPH contacts are provided by valine 286 and glutamate 288.

It belongs to the NAD-dependent glycerol-3-phosphate dehydrogenase family.

It is found in the cytoplasm. The catalysed reaction is sn-glycerol 3-phosphate + NAD(+) = dihydroxyacetone phosphate + NADH + H(+). It catalyses the reaction sn-glycerol 3-phosphate + NADP(+) = dihydroxyacetone phosphate + NADPH + H(+). The protein operates within membrane lipid metabolism; glycerophospholipid metabolism. Its function is as follows. Catalyzes the reduction of the glycolytic intermediate dihydroxyacetone phosphate (DHAP) to sn-glycerol 3-phosphate (G3P), the key precursor for phospholipid synthesis. The sequence is that of Glycerol-3-phosphate dehydrogenase [NAD(P)+] from Cupriavidus necator (strain ATCC 17699 / DSM 428 / KCTC 22496 / NCIMB 10442 / H16 / Stanier 337) (Ralstonia eutropha).